The sequence spans 396 residues: Probable tRNA sulfurtransferase (396 aa).

The THUMP domain maps to N58–S169. Residues L187–L188, Y212–F213, R269, G291, and Q300 contribute to the ATP site.

Belongs to the ThiI family.

It localises to the cytoplasm. It catalyses the reaction [ThiI sulfur-carrier protein]-S-sulfanyl-L-cysteine + a uridine in tRNA + 2 reduced [2Fe-2S]-[ferredoxin] + ATP + H(+) = [ThiI sulfur-carrier protein]-L-cysteine + a 4-thiouridine in tRNA + 2 oxidized [2Fe-2S]-[ferredoxin] + AMP + diphosphate. It carries out the reaction [ThiS sulfur-carrier protein]-C-terminal Gly-Gly-AMP + S-sulfanyl-L-cysteinyl-[cysteine desulfurase] + AH2 = [ThiS sulfur-carrier protein]-C-terminal-Gly-aminoethanethioate + L-cysteinyl-[cysteine desulfurase] + A + AMP + 2 H(+). Its pathway is cofactor biosynthesis; thiamine diphosphate biosynthesis. In terms of biological role, catalyzes the ATP-dependent transfer of a sulfur to tRNA to produce 4-thiouridine in position 8 of tRNAs, which functions as a near-UV photosensor. Also catalyzes the transfer of sulfur to the sulfur carrier protein ThiS, forming ThiS-thiocarboxylate. This is a step in the synthesis of thiazole, in the thiamine biosynthesis pathway. The sulfur is donated as persulfide by IscS. In Halothermothrix orenii (strain H 168 / OCM 544 / DSM 9562), this protein is Probable tRNA sulfurtransferase.